Consider the following 398-residue polypeptide: S-adenosylmethionine synthase (398 aa).

His-26 provides a ligand contact to ATP. Asp-28 serves as a coordination point for Mg(2+). Glu-54 is a binding site for K(+). L-methionine contacts are provided by Glu-67 and Gln-110. Residues 110–120 are flexible loop; that stretch reads QSPDIAQGVNE. ATP-binding positions include 177–179, 243–244, Asp-252, 258–259, Ala-275, and Lys-279; these read DAK, RF, and RK. Asp-252 serves as a coordination point for L-methionine. Lys-283 contributes to the L-methionine binding site.

The protein belongs to the AdoMet synthase family. As to quaternary structure, homotetramer; dimer of dimers. The cofactor is Mg(2+). Requires K(+) as cofactor.

The protein localises to the cytoplasm. The catalysed reaction is L-methionine + ATP + H2O = S-adenosyl-L-methionine + phosphate + diphosphate. Its pathway is amino-acid biosynthesis; S-adenosyl-L-methionine biosynthesis; S-adenosyl-L-methionine from L-methionine: step 1/1. Its function is as follows. Catalyzes the formation of S-adenosylmethionine (AdoMet) from methionine and ATP. The overall synthetic reaction is composed of two sequential steps, AdoMet formation and the subsequent tripolyphosphate hydrolysis which occurs prior to release of AdoMet from the enzyme. The chain is S-adenosylmethionine synthase from Desulfotalea psychrophila (strain LSv54 / DSM 12343).